A 314-amino-acid chain; its full sequence is Ribosomal protein L11 methyltransferase (314 aa).

Residues T161, G182, D204, and N248 each contribute to the S-adenosyl-L-methionine site.

The protein belongs to the methyltransferase superfamily. PrmA family.

Its subcellular location is the cytoplasm. It catalyses the reaction L-lysyl-[protein] + 3 S-adenosyl-L-methionine = N(6),N(6),N(6)-trimethyl-L-lysyl-[protein] + 3 S-adenosyl-L-homocysteine + 3 H(+). In terms of biological role, methylates ribosomal protein L11. This Listeria monocytogenes serotype 1/2a (strain 10403S) protein is Ribosomal protein L11 methyltransferase.